The sequence spans 101 residues: CRISPR-associated endoribonuclease Cas2 (101 aa).

Aspartate 17 serves as a coordination point for Mg(2+).

This sequence belongs to the CRISPR-associated endoribonuclease Cas2 protein family. In terms of assembly, homodimer, forms a heterotetramer with a Cas1 homodimer. It depends on Mg(2+) as a cofactor.

CRISPR (clustered regularly interspaced short palindromic repeat), is an adaptive immune system that provides protection against mobile genetic elements (viruses, transposable elements and conjugative plasmids). CRISPR clusters contain sequences complementary to antecedent mobile elements and target invading nucleic acids. CRISPR clusters are transcribed and processed into CRISPR RNA (crRNA). Functions as a ssRNA-specific endoribonuclease. Involved in the integration of spacer DNA into the CRISPR cassette. This chain is CRISPR-associated endoribonuclease Cas2, found in Methanopyrus kandleri (strain AV19 / DSM 6324 / JCM 9639 / NBRC 100938).